Consider the following 610-residue polypeptide: UvrABC system protein C (610 aa).

The GIY-YIG domain maps to 16–94 (SQPGVYRMYD…IKLYQPRYNV (79 aa)). The UVR domain maps to 204–239 (QQVLTRLIERMEQASQQLKFEDAARYRDQIQAVRQV).

The protein belongs to the UvrC family. As to quaternary structure, interacts with UvrB in an incision complex.

The protein resides in the cytoplasm. Its function is as follows. The UvrABC repair system catalyzes the recognition and processing of DNA lesions. UvrC both incises the 5' and 3' sides of the lesion. The N-terminal half is responsible for the 3' incision and the C-terminal half is responsible for the 5' incision. The sequence is that of UvrABC system protein C from Photorhabdus laumondii subsp. laumondii (strain DSM 15139 / CIP 105565 / TT01) (Photorhabdus luminescens subsp. laumondii).